A 65-amino-acid chain; its full sequence is Sulfur carrier protein TtuB (65 aa).

Gly65 is subject to 1-thioglycine; alternate. The residue at position 65 (Gly65) is a Glycyl adenylate; alternate. A Glycyl cysteine thioester (Gly-Cys) (interchain with C-192 in TtuC); alternate cross-link involves residue Gly65. Residue Gly65 forms a Glycyl lysine isopeptide (Gly-Lys) (interchain with K-? in acceptor proteins); alternate linkage.

This sequence belongs to the TtuB family. As to quaternary structure, is able to form a heterocomplex with TtuA. The C-terminal glycine residue of TtuB is first activated by TtuC as an acyl-adenylate (TtuB-COAMP), and then converted to the thiocarboxylate form (TtuB-COSH) by the cysteine desulfurases IscS or SufS.

It functions in the pathway tRNA modification. Functionally, required for the 2-thiolation of 5-methyluridine residue at position 54 in the T loop of tRNAs, leading to 5-methyl-2-thiouridine (m(5)s(2)U or s(2)T). This modification allows thermal stabilization of tRNAs in thermophilic microorganisms, and is essential for cell growth at high temperatures. Thiocarboxylated TtuB functions as the sulfur donor in the sulfurtransferase reaction catalyzed by TtuA. TtuB also functions as a protein modifier covalently attached to lysine residues of the target proteins TtuA and TtuC. TtuB conjugation might play a regulatory role to ensure appropriate sulfur transfer in cells. The sequence is that of Sulfur carrier protein TtuB from Thermus thermophilus (strain ATCC BAA-163 / DSM 7039 / HB27).